Reading from the N-terminus, the 151-residue chain is Large ribosomal subunit protein bL9 (151 aa).

Belongs to the bacterial ribosomal protein bL9 family.

Binds to the 23S rRNA. The protein is Large ribosomal subunit protein bL9 of Francisella philomiragia subsp. philomiragia (strain ATCC 25017 / CCUG 19701 / FSC 153 / O#319-036).